The following is a 564-amino-acid chain: Proline--tRNA ligase (564 aa).

It belongs to the class-II aminoacyl-tRNA synthetase family. ProS type 1 subfamily. Homodimer.

The protein localises to the cytoplasm. The enzyme catalyses tRNA(Pro) + L-proline + ATP = L-prolyl-tRNA(Pro) + AMP + diphosphate. In terms of biological role, catalyzes the attachment of proline to tRNA(Pro) in a two-step reaction: proline is first activated by ATP to form Pro-AMP and then transferred to the acceptor end of tRNA(Pro). As ProRS can inadvertently accommodate and process non-cognate amino acids such as alanine and cysteine, to avoid such errors it has two additional distinct editing activities against alanine. One activity is designated as 'pretransfer' editing and involves the tRNA(Pro)-independent hydrolysis of activated Ala-AMP. The other activity is designated 'posttransfer' editing and involves deacylation of mischarged Ala-tRNA(Pro). The misacylated Cys-tRNA(Pro) is not edited by ProRS. In Coxiella burnetii (strain RSA 331 / Henzerling II), this protein is Proline--tRNA ligase.